Consider the following 223-residue polypeptide: Class E basic helix-loop-helix protein 23 (223 aa).

The segment at 32–93 (PETTRGFGAS…GVAVDARRRP (62 aa)) is disordered. Positions 98-152 (SLRLSINARERRRMHDLNDALDGLRAVIPYAHSPSVRKLSKIATLLLAKNYILMQ) constitute a bHLH domain.

As to expression, expressed in brain and retina.

Its subcellular location is the nucleus. In terms of biological role, may function as transcriptional repressor. May modulate the expression of genes required for the differentiation and/or maintenance of pancreatic and neuronal cell types. May be important for rod bipolar cell maturation. In Mus musculus (Mouse), this protein is Class E basic helix-loop-helix protein 23 (Bhlhe23).